A 1300-amino-acid polypeptide reads, in one-letter code: ATP-dependent RNA helicase HrpA (1300 aa).

The Helicase ATP-binding domain maps to 87 to 250; that stretch reads LEAIRDHQVV…FNNAPIIEVS (164 aa). Residue 100 to 107 coordinates ATP; that stretch reads GETGSGKT. Positions 197 to 200 match the DEAH box motif; the sequence is DEAH. The Helicase C-terminal domain maps to 274 to 444; the sequence is QLQAIFDAVD…SVILQMTALG (171 aa).

The protein belongs to the DEAD box helicase family. DEAH subfamily.

The enzyme catalyses ATP + H2O = ADP + phosphate + H(+). Functionally, not yet known. The sequence is that of ATP-dependent RNA helicase HrpA (hrpA) from Escherichia coli (strain K12).